The chain runs to 278 residues: MEFDELMQCPYDKNHMIRPSRFPYHLVKCRENNRAAAKILATCPYNARHRVPKQELDLHMASCEYRVTMEPISAAFSHQKVETSTWQSPPCEEVWETDEDPVSRPKPFILNDFTPSQPFNMSEGDGNMPYTGISSNYRPEVQPMNSVMQVKQNQPEPEPFTSSERNYDPRSKEPPNPKQPAVNGYKPATTNTNPWCRQTGGSRGAAPPKLGAKSSDEGPRNKEFPTPKANLMNEYVPVAANANPWCRQPGGSSAASEPLGVDSFDEWPCLGRQPWVRK.

CHHC U11-48K-type zinc fingers lie at residues Leu6–Asn33 and Leu40–Val67. Positions 9, 15, 25, 29, 43, 49, 59, and 63 each coordinate Zn(2+). A compositionally biased stretch (polar residues) spans Gln149 to Glu164. 2 disordered regions span residues Gln149 to Asn230 and Pro249 to Lys278. The span at Arg165–Pro175 shows a compositional bias: basic and acidic residues. The segment covering Ala188–Gly200 has biased composition (polar residues). A compositionally biased stretch (basic and acidic residues) spans Ser214–Pro225.

Belongs to the UPF0224 (FAM112) family.

The protein resides in the cytoplasm. Its function is as follows. Involved in oocyte maturation. It is possible that D7 is required at a certain point in the maturation process and that maturation cannot proceed beyond this point unless a threshold amount of D7 protein is provided. The chain is Protein D7 (d7) from Xenopus laevis (African clawed frog).